The primary structure comprises 427 residues: Ectonucleoside triphosphate diphosphohydrolase 5 (427 aa).

Residues 1–24 (MATSWGAVFMLIIACVGSTVFYRE) form the signal peptide. The active-site Proton acceptor is the glutamate 171. The N-linked (GlcNAc...) asparagine glycan is linked to asparagine 231. Cystine bridges form between cysteine 271–cysteine 302 and cysteine 362–cysteine 376.

It belongs to the GDA1/CD39 NTPase family. As to quaternary structure, monomer; active form. Homodimer; disulfide-linked. Homodimers are enzymatically inactive. Requires Ca(2+) as cofactor. Mg(2+) serves as cofactor. In terms of processing, N-glycosylated; high-mannose type. As to expression, ubiquitous.

The protein localises to the endoplasmic reticulum. Its subcellular location is the secreted. The catalysed reaction is a ribonucleoside 5'-diphosphate + H2O = a ribonucleoside 5'-phosphate + phosphate + H(+). It catalyses the reaction GDP + H2O = GMP + phosphate + H(+). It carries out the reaction UDP + H2O = UMP + phosphate + H(+). The enzyme catalyses IDP + H2O = IMP + phosphate + H(+). The catalysed reaction is CDP + H2O = CMP + phosphate + H(+). It catalyses the reaction ADP + H2O = AMP + phosphate + H(+). It participates in protein modification; protein glycosylation. In terms of biological role, hydrolyzes nucleoside diphosphates with a preference for GDP, IDP and UDP compared to ADP and CDP. In the lumen of the endoplasmic reticulum, hydrolyzes UDP that acts as an end-product feedback inhibitor of the UDP-Glc:glycoprotein glucosyltransferases. UMP can be transported back by an UDP-sugar antiporter to the cytosol where it is consumed to regenerate UDP-glucose. Therefore, it positively regulates protein reglucosylation by clearing UDP from the ER lumen and by promoting the regeneration of UDP-glucose. Protein reglucosylation is essential to proper glycoprotein folding and quality control in the ER. The polypeptide is Ectonucleoside triphosphate diphosphohydrolase 5 (Entpd5) (Mus musculus (Mouse)).